The primary structure comprises 259 residues: Phosphate import ATP-binding protein PstB 1 (259 aa).

One can recognise an ABC transporter domain in the interval 13 to 254; that stretch reads IQVRGLEFFY…PSKTQTEDYI (242 aa). 45–52 serves as a coordination point for ATP; it reads GPSGCGKS.

It belongs to the ABC transporter superfamily. Phosphate importer (TC 3.A.1.7) family. The complex is composed of two ATP-binding proteins (PstB), two transmembrane proteins (PstC and PstA) and a solute-binding protein (PstS).

The protein resides in the cell inner membrane. It catalyses the reaction phosphate(out) + ATP + H2O = ADP + 2 phosphate(in) + H(+). Its function is as follows. Part of the ABC transporter complex PstSACB involved in phosphate import. Responsible for energy coupling to the transport system. This Pseudomonas savastanoi pv. phaseolicola (strain 1448A / Race 6) (Pseudomonas syringae pv. phaseolicola (strain 1448A / Race 6)) protein is Phosphate import ATP-binding protein PstB 1.